Consider the following 172-residue polypeptide: Ribosome maturation factor RimM (172 aa).

The PRC barrel domain maps to 97-170 (ENEFYFHEII…KITIEVMEGL (74 aa)).

The protein belongs to the RimM family. In terms of assembly, binds ribosomal protein uS19.

It localises to the cytoplasm. In terms of biological role, an accessory protein needed during the final step in the assembly of 30S ribosomal subunit, possibly for assembly of the head region. Essential for efficient processing of 16S rRNA. May be needed both before and after RbfA during the maturation of 16S rRNA. It has affinity for free ribosomal 30S subunits but not for 70S ribosomes. In Listeria monocytogenes serovar 1/2a (strain ATCC BAA-679 / EGD-e), this protein is Ribosome maturation factor RimM.